Here is a 624-residue protein sequence, read N- to C-terminus: Kelch-like ECH-associated protein 1 (624 aa).

At C38 the chain carries S-(2-succinyl)cysteine. A BTB domain is found at 77–149; sequence CDVTLQVKYE…AYTASISVGE (73 aa). Residue R135 forms an N5-[4-(S-L-cysteinyl)-5-methyl-1H-imidazol-2-yl]-L-ornithine (Arg-Cys) (interchain with C-151 in KEAP1) linkage. C151 and C241 each carry S-(2-succinyl)cysteine. C151 carries the S-(2,3-dicarboxypropyl)cysteine; alternate modification. C151 is modified (S-nitrosocysteine; alternate). C151 is covalently cross-linked (N5-[4-(S-L-cysteinyl)-5-methyl-1H-imidazol-2-yl]-L-ornithine (Cys-Arg) (interchain with R-135 in KEAP1)). Positions 184 to 286 constitute a BACK domain; sequence AIGIANFAEQ…TPRFLQTQLQ (103 aa). An S-(2,3-dicarboxypropyl)cysteine mark is found at C257 and C273. S-(2-succinyl)cysteine occurs at positions 288 and 319. C288 is subject to S-(2,3-dicarboxypropyl)cysteine; alternate. 6 Kelch repeats span residues 327–372, 373–423, 424–470, 471–517, 519–564, and 565–611; these read LIYT…VVGG, LLYA…VIDG, HIYA…VLNR, LLYA…VLHS, IYAA…VHQG, and RIYV…VTME. An S-cGMP-cysteine modification is found at C434. C613 bears the S-(2-succinyl)cysteine mark.

Belongs to the KEAP1 family. Component of the BCR(KEAP1) E3 ubiquitin ligase complex, at least composed of 2 molecules of CUL3, 2 molecules of KEAP1, and RBX1. Interacts with NFE2L2/NRF2; the interaction is direct. Forms a ternary complex with NFE2L2/NRF2 and PGAM5. Interacts with (phosphorylated) SQSTM1/p62; the interaction is direct and inactivates the BCR(KEAP1) complex by sequestering it in inclusion bodies, promoting its degradation. Interacts with NFE2L1. Interacts with BPTF and PTMA. Interacts with MAP1LC3B. Interacts indirectly with ENC1. Interacts with SESN1 and SESN2. Interacts with HSP90AA1 and HSP90AB1. Interacts with PGCKA1; this interaction prevents the ubiquitination of KEAP1 by TRIM25, thus protecting KEAP1 from degradation. Non-enzymatic covalent modifications of reactive cysteines by electrophile metabolites inactivate the BCR(KEAP1) complex. Accumulation of fumarate promotes the formation of cysteine S-succination (S-(2-succinyl)cysteine), leading to inactivate the BCR(KEAP1) complex and promote NFE2L2/NRF2 nuclear accumulation and activation. Nitric oxide-dependent 8-Nitro-cGMP formation promotes cysteine guanylation (S-cGMP-cysteine), leading to NFE2L2/NRF2 nuclear accumulation and activation. Itaconate, an anti-inflammatory metabolite generated in response to lipopolysaccharide, alkylates cysteines, activating NFE2L2/NRF2. Methylglyoxal, a reactive metabolite that accumulates when the glycolytic enzyme PGK1 is inhibited, promotes formation of a methylimidazole cross-link between proximal Cys-151 and Arg-135 on another KEAP1 molecule, resulting in an inactive dimer that inactivates the BCR(KEAP1) complex. Post-translationally, degraded via a proteasomal-independent process during selective autophagy: interaction with phosphorylated SQSTM1/p62 sequesters KEAP1 in inclusion bodies, leading to its degradation. In terms of processing, auto-ubiquitinated by the BCR(KEAP1) complex. Quinone-induced oxidative stress, but not sulforaphane, increases its ubiquitination. Ubiquitination and subsequent degradation is most pronounced following prolonged exposure of cells to oxidative stress, particularly in glutathione-deficient cells that are highly susceptible to oxidative stress. Deubiquitinated by USP25; leading to stabilization. Ubiquitinated by TRIM25; leading to degradation upon ER stress.

The protein localises to the cytoplasm. Its subcellular location is the nucleus. It functions in the pathway protein modification; protein ubiquitination. Its activity is regulated as follows. Ubiquitin ligase activity of the BCR(KEAP1) complex is inhibited by oxidative stress and electrophile metabolites such as sulforaphane. Electrophile metabolites react with reactive cysteine residues in KEAP1 and trigger non-enzymatic covalent modifications of these cysteine residues, leading to inactivate the ubiquitin ligase activity of the BCR(KEAP1) complex. Selective autophagy also inactivates the BCR(KEAP1) complex via interaction between KEAP1 and SQSTM1/p62, which sequesters the complex in inclusion bodies and promotes its degradation. Functionally, substrate-specific adapter of a BCR (BTB-CUL3-RBX1) E3 ubiquitin ligase complex that regulates the response to oxidative stress by targeting NFE2L2/NRF2 for ubiquitination. KEAP1 acts as a key sensor of oxidative and electrophilic stress: in normal conditions, the BCR(KEAP1) complex mediates ubiquitination and degradation of NFE2L2/NRF2, a transcription factor regulating expression of many cytoprotective genes. In response to oxidative stress, different electrophile metabolites trigger non-enzymatic covalent modifications of highly reactive cysteine residues in KEAP1, leading to inactivate the ubiquitin ligase activity of the BCR(KEAP1) complex, promoting NFE2L2/NRF2 nuclear accumulation and expression of phase II detoxifying enzymes. In response to selective autophagy, KEAP1 is sequestered in inclusion bodies following its interaction with SQSTM1/p62, leading to inactivation of the BCR(KEAP1) complex and activation of NFE2L2/NRF2. The BCR(KEAP1) complex also mediates ubiquitination of SQSTM1/p62, increasing SQSTM1/p62 sequestering activity and degradation. The BCR(KEAP1) complex also targets BPTF and PGAM5 for ubiquitination and degradation by the proteasome. The sequence is that of Kelch-like ECH-associated protein 1 from Rattus norvegicus (Rat).